Consider the following 163-residue polypeptide: Small ribosomal subunit protein bS18c (163 aa).

Disordered stretches follow at residues 1 to 54 and 121 to 163; these read MYTS…PGDR and ITGP…SSDC. The segment covering 7–48 has biased composition (basic residues); sequence PFHKSKQTFHKSKQTFRKSKQTFRKFKQPFRKPKQPFRRRPR. The span at 140 to 163 shows a compositional bias: low complexity; it reads NSNRNLRNSNQTLRNNNRNLSSDC.

This sequence belongs to the bacterial ribosomal protein bS18 family. As to quaternary structure, part of the 30S ribosomal subunit.

The protein localises to the plastid. It is found in the chloroplast. This is Small ribosomal subunit protein bS18c from Oryza nivara (Indian wild rice).